We begin with the raw amino-acid sequence, 835 residues long: Protein translocase subunit SecA (835 aa).

ATP contacts are provided by residues Gln85, 103–107 (GEGKT), and Asp492. The disordered stretch occupies residues 788 to 807 (VQGEAVHPSSDGEEAKKKPV). The Zn(2+) site is built by Cys819, Cys821, Cys830, and Cys831.

It belongs to the SecA family. In terms of assembly, monomer and homodimer. Part of the essential Sec protein translocation apparatus which comprises SecA, SecYEG and auxiliary proteins SecDF. Other proteins may also be involved. Zn(2+) serves as cofactor.

It is found in the cell membrane. The protein localises to the cytoplasm. The enzyme catalyses ATP + H2O + cellular proteinSide 1 = ADP + phosphate + cellular proteinSide 2.. In terms of biological role, part of the Sec protein translocase complex. Interacts with the SecYEG preprotein conducting channel. Has a central role in coupling the hydrolysis of ATP to the transfer of proteins into and across the cell membrane, serving as an ATP-driven molecular motor driving the stepwise translocation of polypeptide chains across the membrane. This chain is Protein translocase subunit SecA, found in Bacillus cereus (strain B4264).